Here is a 234-residue protein sequence, read N- to C-terminus: Leucyl/phenylalanyl-tRNA--protein transferase (234 aa).

It belongs to the L/F-transferase family.

It localises to the cytoplasm. The enzyme catalyses N-terminal L-lysyl-[protein] + L-leucyl-tRNA(Leu) = N-terminal L-leucyl-L-lysyl-[protein] + tRNA(Leu) + H(+). It carries out the reaction N-terminal L-arginyl-[protein] + L-leucyl-tRNA(Leu) = N-terminal L-leucyl-L-arginyl-[protein] + tRNA(Leu) + H(+). The catalysed reaction is L-phenylalanyl-tRNA(Phe) + an N-terminal L-alpha-aminoacyl-[protein] = an N-terminal L-phenylalanyl-L-alpha-aminoacyl-[protein] + tRNA(Phe). Its function is as follows. Functions in the N-end rule pathway of protein degradation where it conjugates Leu, Phe and, less efficiently, Met from aminoacyl-tRNAs to the N-termini of proteins containing an N-terminal arginine or lysine. The protein is Leucyl/phenylalanyl-tRNA--protein transferase of Shigella dysenteriae serotype 1 (strain Sd197).